The following is a 700-amino-acid chain: Elongation factor G (700 aa).

The tr-type G domain occupies 10-286 (TKVRNIGIMA…AVVDYLPSPL (277 aa)). Residues 19–26 (AHIDAGKT), 83–87 (DTPGH), and 137–140 (NKMD) each bind GTP.

It belongs to the TRAFAC class translation factor GTPase superfamily. Classic translation factor GTPase family. EF-G/EF-2 subfamily.

Its subcellular location is the cytoplasm. Catalyzes the GTP-dependent ribosomal translocation step during translation elongation. During this step, the ribosome changes from the pre-translocational (PRE) to the post-translocational (POST) state as the newly formed A-site-bound peptidyl-tRNA and P-site-bound deacylated tRNA move to the P and E sites, respectively. Catalyzes the coordinated movement of the two tRNA molecules, the mRNA and conformational changes in the ribosome. This chain is Elongation factor G, found in Saccharopolyspora erythraea (strain ATCC 11635 / DSM 40517 / JCM 4748 / NBRC 13426 / NCIMB 8594 / NRRL 2338).